The following is a 653-amino-acid chain: MAAAAASHLNLDALREVLECPICMESFTEEQLRPKLLHCGHTICRQCLEKLLASSINGVRCPFCSKITRITSLTQLTDNLTVLKIIDTAGLSEAVGLLMCRSCGRRLPRQFCRSCGLVLCEPCREADHQPPGHCTLPVKEAAEERRRDFGEKLTRLRELMGELQRRKAALEGVSKDLQARYKAVLQEYGHEERRVQDELARSRKFFTGSLAEVEKSNSQVVEEQSYLLNIAEVQAVSRCDYFLAKIKQADVALLEETADEEEPELTASLPRELTLQDVELLKVGHVGPLQIGQAVKKPRTVNVEDSWAMEATASAASTSVTFREMDMSPEEVVASPRASPAKQRGPEAASNIQQCLFLKKMGAKGSTPGMFNLPVSLYVTSQGEVLVADRGNYRIQVFTRKGFLKEIRRSPSGIDSFVLSFLGADLPNLTPLSVAMNCQGLIGVTDSYDNSLKVYTLDGHCVACHRSQLSKPWGITALPSGQFVVTDVEGGKLWCFTVDRGSGVVKYSCLCSAVRPKFVTCDAEGTVYFTQGLGLNLENRQNEHHLEGGFSIGSVGPDGQLGRQISHFFSENEDFRCIAGMCVDARGDLIVADSSRKEILHFPKGGGYSVLIREGLTCPVGIALTPKGQLLVLDCWDHCIKIYSYHLRRYSTP.

An N-acetylalanine modification is found at A2. An RING-type zinc finger spans residues 20–65; the sequence is CPICMESFTEEQLRPKLLHCGHTICRQCLEKLLASSINGVRCPFCS. The residue at position 55 (S55) is a Phosphoserine; by CHEK2. The Zn(2+) site is built by C100, C103, C123, and H128. The segment at 103-133 adopts a B box-type zinc-finger fold; it reads CGRRLPRQFCRSCGLVLCEPCREADHQPPGH. Residues 138–197 adopt a coiled-coil conformation; it reads VKEAAEERRRDFGEKLTRLRELMGELQRRKAALEGVSKDLQARYKAVLQEYGHEERRVQD. Phosphoserine is present on residues S328, S335, and S339. NHL repeat units follow at residues 358–401, 415–458, 459–499, 562–605, and 606–646; these read LKKM…FTRK, DSFV…YTLD, GHCV…FTVD, GRQI…FPKG, and GGYS…YSYH.

Belongs to the TRIM/RBCC family. As to quaternary structure, it self-associates. Interacts with DTNBP1. Interacts with PIAS4/PIASY upon treatment with UVB and TNF-alpha. Interacts with AMBRA1; promoting activation of ULK1 through unanchored 'Lys-63'-linked polyubiquitin chains. Interacts with TICAM1 and TAX1BP1; these interactions target TICAM1 to TAX1BP1-mediated selective autophagic degradation. (Microbial infection) Interacts with S.typhimurium protein SseK3; SseK3 does not glycosylate TRIM32. Post-translationally, ubiquitinated. In terms of processing, phosphorylation at Ser-55 by CHEK2 under oxidative stress, activates the E3 ligase activity and promotes ATG7 ubiquitination leading to positive regulation of the autophagosme assembly. In terms of tissue distribution, spleen, thymus, prostate, testis, ovary, intestine, colon and skeletal muscle.

The protein localises to the cytoplasm. The protein resides in the mitochondrion. Its subcellular location is the endoplasmic reticulum. The catalysed reaction is S-ubiquitinyl-[E2 ubiquitin-conjugating enzyme]-L-cysteine + [acceptor protein]-L-lysine = [E2 ubiquitin-conjugating enzyme]-L-cysteine + N(6)-ubiquitinyl-[acceptor protein]-L-lysine.. The protein operates within protein modification; protein ubiquitination. E3 ubiquitin ligase that plays a role in various biological processes including neural stem cell differentiation, innate immunity, inflammatory resonse and autophagy. Plays a role in virus-triggered induction of IFN-beta and TNF-alpha by mediating the ubiquitination of STING1. Mechanistically, targets STING1 for 'Lys-63'-linked ubiquitination which promotes the interaction of STING1 with TBK1. Regulates bacterial clearance and promotes autophagy in Mycobacterium tuberculosis-infected macrophages. Negatively regulates TLR3/4-mediated innate immune and inflammatory response by triggering the autophagic degradation of TICAM1 in an E3 activity-independent manner. Plays an essential role in oxidative stress induced cell death by inducing loss of transmembrane potential and enhancing mitochondrial reactive oxygen species (ROS) production during oxidative stress conditions. Ubiquitinates XIAP and targets it for proteasomal degradation. Ubiquitinates DTNBP1 (dysbindin) and promotes its degradation. May ubiquitinate BBS2. Ubiquitinates PIAS4/PIASY and promotes its degradation in keratinocytes treated with UVB and TNF-alpha. Also acts as a regulator of autophagy by mediating formation of unanchored 'Lys-63'-linked polyubiquitin chains that activate ULK1: interaction with AMBRA1 is required for ULK1 activation. Positively regulates dendritic branching by promoting ubiquitination and subsequent degradation of the epigenetic factor CDYL. Under metabolic stress and phosphorylation by CHK2, mediates 'Lys-63'-linked ubiquitination of ATG7 at 'Lys-45' to initiate autophagy. In terms of biological role, (Microbial infection) May play a significant role in mediating the biological activity of the HIV-1 Tat protein in vivo. Binds specifically to the activation domain of HIV-1 Tat and can also interact with the HIV-2 and EIAV Tat proteins in vivo. The protein is E3 ubiquitin-protein ligase TRIM32 of Homo sapiens (Human).